A 306-amino-acid polypeptide reads, in one-letter code: Ribonuclease Z (306 aa).

Positions 63, 65, 67, 68, 141, 211, and 269 each coordinate Zn(2+). D67 (proton acceptor) is an active-site residue.

This sequence belongs to the RNase Z family. As to quaternary structure, homodimer. The cofactor is Zn(2+).

The catalysed reaction is Endonucleolytic cleavage of RNA, removing extra 3' nucleotides from tRNA precursor, generating 3' termini of tRNAs. A 3'-hydroxy group is left at the tRNA terminus and a 5'-phosphoryl group is left at the trailer molecule.. Functionally, zinc phosphodiesterase, which displays some tRNA 3'-processing endonuclease activity. Probably involved in tRNA maturation, by removing a 3'-trailer from precursor tRNA. In Staphylococcus epidermidis (strain ATCC 12228 / FDA PCI 1200), this protein is Ribonuclease Z.